Consider the following 82-residue polypeptide: DNA-directed RNA polymerase subunit Rpo5 (82 aa).

Belongs to the archaeal Rpo5/eukaryotic RPB5 RNA polymerase subunit family. In terms of assembly, part of the RNA polymerase complex.

The protein resides in the cytoplasm. It carries out the reaction RNA(n) + a ribonucleoside 5'-triphosphate = RNA(n+1) + diphosphate. In terms of biological role, DNA-dependent RNA polymerase (RNAP) catalyzes the transcription of DNA into RNA using the four ribonucleoside triphosphates as substrates. This Thermococcus onnurineus (strain NA1) protein is DNA-directed RNA polymerase subunit Rpo5.